The chain runs to 179 residues: UPF0398 protein SSU05_0416 (179 aa).

This sequence belongs to the UPF0398 family.

This is UPF0398 protein SSU05_0416 from Streptococcus suis (strain 05ZYH33).